Consider the following 241-residue polypeptide: DNA repair protein RecO (241 aa).

The protein belongs to the RecO family.

Functionally, involved in DNA repair and RecF pathway recombination. The chain is DNA repair protein RecO from Azobacteroides pseudotrichonymphae genomovar. CFP2.